Consider the following 185-residue polypeptide: CASP-like protein SELMODRAFT_413556 (185 aa).

Topologically, residues 1-89 are cytoplasmic; it reads MATLPLSLIF…AVTVLFYLAK (89 aa). A helical transmembrane segment spans residues 90 to 110; sequence LVFGILGLALSIIWLLHIIVF. The Extracellular portion of the chain corresponds to 111 to 131; it reads MLVNPPAFPFLNQVFIQLDSA. The chain crosses the membrane as a helical span at residues 132 to 152; the sequence is WGLLGTTAFAIFCYYLIMSVI. Over 153–163 the chain is Cytoplasmic; sequence SGEMHSIHPMK. The chain crosses the membrane as a helical span at residues 164–184; the sequence is YQGTLMNSFLFNVAIILLCST. Arg-185 is a topological domain (extracellular).

This sequence belongs to the Casparian strip membrane proteins (CASP) family. In terms of assembly, homodimer and heterodimers.

The protein localises to the cell membrane. In Selaginella moellendorffii (Spikemoss), this protein is CASP-like protein SELMODRAFT_413556.